Reading from the N-terminus, the 296-residue chain is Short-chain dehydrogenase/reductase ascJ (296 aa).

3 residues coordinate NADP(+): Ile-28, Asp-66, and Asn-93. The active-site Proton donor is the Ser-155. NADP(+) contacts are provided by Tyr-168, Lys-172, and Thr-205. Tyr-168 functions as the Proton acceptor in the catalytic mechanism. Lys-172 functions as the Lowers pKa of active site Tyr in the catalytic mechanism.

This sequence belongs to the short-chain dehydrogenases/reductases (SDR) family.

The catalysed reaction is ascofuranol + A = ascofuranone + AH2. The protein operates within secondary metabolite biosynthesis; terpenoid biosynthesis. In terms of biological role, short-chain dehydrogenase/reductase; part of the asc-2 gene cluster that mediates the biosynthesis of ascofuranone, a strong inhibitor of cyanide-insensitive alternative oxidases and a promising drug candidate against African trypanosomiasis. The first step in the pathway is performed by the non-reducing polyketide synthase ascC that produces orsellinic acid by condensing acetyl-CoA with 3 malonyl-CoA units. Orsellinic acid is then prenylated by the prenyltransferase ascA to yield ilicicolinic acid B. Ilicicolinic acid B is further reduced to ilicicolin B by the reductase ascB. The halogenase ascD then chlorinates ilicicolin B to produce ilicicolin A which is converted to ilicicolin A epoxide by the cytochrome P450 monooxygenase ascE that catalyzes stereoselective epoxidation of the terminal double bond of the prenyl group. Ilicicolin A epoxide is the last common precursor for the biosynthesis of ascofuranone and ascochlorin. The terpene cyclase ascF produces a monocyclic terpene, and the cyclization reaction is proposed to be initiated by protonation of the terminal epoxide of ilicicolin A epoxide to generate a monocyclic tertiarycation, which is followed by a series of hydride and methyl shifts with abstraction of proton, leading to the formation of the (14S,15R,19R)-trimethylcyclohexanone ring structure of ilicicolin C, which is finally reduced to ascochlorin by the dehydrogenase ascG. On the other hand, ilicicolin A epoxide is hydroxylated by the cytochrome P450 monooxygenase ascH, and the resultant product is cyclized by the terpene cyclase ascI to ascofuranol via protonation-initiated epoxide ring opening, which facilitates the 6-endo-tet cyclization to form the tetrahy-drofuran ring. Finally, ascofuranol is oxidized into ascofuranone by ascJ. The chain is Short-chain dehydrogenase/reductase ascJ from Acremonium egyptiacum (Oospora egyptiaca).